A 345-amino-acid polypeptide reads, in one-letter code: Fe-S cluster assembly protein DRE2 (345 aa).

Residues 29 to 163 form an N-terminal SAM-like domain region; that stretch reads GDSGDRTLLL…KPDYAEQEVV (135 aa). A linker region spans residues 164-237; the sequence is PLRFGAKKVN…EDTLLTEADL (74 aa). Residues C247, C258, C261, and C263 each contribute to the [2Fe-2S] cluster site. Positions 247–263 are fe-S binding site A; it reads CAPQPGKKRRACKDCTC. 4 residues coordinate [4Fe-4S] cluster: C308, C311, C319, and C322. Short sequence motifs (cx2C motif) lie at residues 308–311 and 319–322; these read CNSC and CADC. The tract at residues 308–322 is fe-S binding site B; it reads CNSCYLGDAFRCADC.

This sequence belongs to the anamorsin family. Monomer. Interacts with TAH18. Interacts with MIA40. [2Fe-2S] cluster is required as a cofactor. [4Fe-4S] cluster serves as cofactor.

It is found in the cytoplasm. Its subcellular location is the mitochondrion intermembrane space. Its function is as follows. Component of the cytosolic iron-sulfur (Fe-S) protein assembly (CIA) machinery required for the maturation of extramitochondrial Fe-S proteins. Part of an electron transfer chain functioning in an early step of cytosolic Fe-S biogenesis, facilitating the de novo assembly of a [4Fe-4S] cluster on the scaffold complex CFD1-NBP35. Electrons are transferred to DRE2 from NADPH via the FAD- and FMN-containing protein TAH18. TAH18-DRE2 are also required for the assembly of the diferric tyrosyl radical cofactor of ribonucleotide reductase (RNR), probably by providing electrons for reduction during radical cofactor maturation in the catalytic small subunit RNR2. The chain is Fe-S cluster assembly protein DRE2 from Podospora anserina (strain S / ATCC MYA-4624 / DSM 980 / FGSC 10383) (Pleurage anserina).